Reading from the N-terminus, the 164-residue chain is Ribosome maturation factor RimP (164 aa).

This sequence belongs to the RimP family.

It localises to the cytoplasm. Its function is as follows. Required for maturation of 30S ribosomal subunits. This chain is Ribosome maturation factor RimP, found in Thermodesulfovibrio yellowstonii (strain ATCC 51303 / DSM 11347 / YP87).